Here is a 260-residue protein sequence, read N- to C-terminus: DNA repair protein RecO (260 aa).

The protein belongs to the RecO family.

In terms of biological role, involved in DNA repair and RecF pathway recombination. In Levilactobacillus brevis (strain ATCC 367 / BCRC 12310 / CIP 105137 / JCM 1170 / LMG 11437 / NCIMB 947 / NCTC 947) (Lactobacillus brevis), this protein is DNA repair protein RecO.